Consider the following 578-residue polypeptide: Rhamnogalacturonate lyase (578 aa).

The signal sequence occupies residues 1-27 (MHMNKPLQAWRTPLLTLIFVLPLTATG).

Belongs to the polysaccharide lyase 4 family.

It localises to the secreted. The enzyme catalyses Endotype eliminative cleavage of L-alpha-rhamnopyranosyl-(1-&gt;4)-alpha-D-galactopyranosyluronic acid bonds of rhamnogalacturonan I domains in ramified hairy regions of pectin leaving L-rhamnopyranose at the reducing end and 4-deoxy-4,5-unsaturated D-galactopyranosyluronic acid at the non-reducing end.. Degrades the rhamnogalacturonan I (RG-I) backbone of pectin. Is required for the full virulence of E.chrysanthemi strain 3937 as it is involved in rotting of plant tissue. In Dickeya dadantii (strain 3937) (Erwinia chrysanthemi (strain 3937)), this protein is Rhamnogalacturonate lyase (rhiE).